The chain runs to 217 residues: MNQSLLTPFGTAIERVEAALTSLRQGQGVLVVDDEDRENEGDLIYSAQSLTNEQMALLIRECSGIVCLCLTDERIKQLDLPPMVEDNSSQYGTAFTVSIEAKVGVTTGVSAADRVTTIKAAIADNAVPEDLARPGHVYPLRAQSGGVFSRRGHTEGTIDLMLLAGLKPAGVLCEITNPDGTMARLPEIIQFGQQHNLPVLTIEDIVEYRKVTMEKAS.

D-ribulose 5-phosphate-binding positions include 37–38 (RE), Asp42, 150–154 (RRGHT), and Glu174. Glu38 provides a ligand contact to Mg(2+). Residue His153 participates in Mg(2+) binding.

It belongs to the DHBP synthase family. As to quaternary structure, homodimer. It depends on Mg(2+) as a cofactor. Mn(2+) serves as cofactor.

The catalysed reaction is D-ribulose 5-phosphate = (2S)-2-hydroxy-3-oxobutyl phosphate + formate + H(+). The protein operates within cofactor biosynthesis; riboflavin biosynthesis; 2-hydroxy-3-oxobutyl phosphate from D-ribulose 5-phosphate: step 1/1. In terms of biological role, catalyzes the conversion of D-ribulose 5-phosphate to formate and 3,4-dihydroxy-2-butanone 4-phosphate. The protein is 3,4-dihydroxy-2-butanone 4-phosphate synthase of Shewanella woodyi (strain ATCC 51908 / MS32).